Consider the following 429-residue polypeptide: Histidine--tRNA ligase (429 aa).

Belongs to the class-II aminoacyl-tRNA synthetase family. In terms of assembly, homodimer.

The protein resides in the cytoplasm. The enzyme catalyses tRNA(His) + L-histidine + ATP = L-histidyl-tRNA(His) + AMP + diphosphate + H(+). The protein is Histidine--tRNA ligase of Acidovorax ebreus (strain TPSY) (Diaphorobacter sp. (strain TPSY)).